Here is a 355-residue protein sequence, read N- to C-terminus: Fructose-1,6-bisphosphatase class 1 (355 aa).

Glu-90, Asp-109, Leu-111, and Asp-112 together coordinate Mg(2+). Substrate-binding positions include 112 to 115, Asn-204, and 256 to 258; these read DGSS and YLY. Position 276 (Glu-276) interacts with Mg(2+).

It belongs to the FBPase class 1 family. In terms of assembly, homotetramer. Mg(2+) serves as cofactor.

It localises to the cytoplasm. The enzyme catalyses beta-D-fructose 1,6-bisphosphate + H2O = beta-D-fructose 6-phosphate + phosphate. Its pathway is carbohydrate biosynthesis; gluconeogenesis. This Acidiphilium cryptum (strain JF-5) protein is Fructose-1,6-bisphosphatase class 1.